Reading from the N-terminus, the 428-residue chain is Enolase (428 aa).

Gln162 contributes to the (2R)-2-phosphoglycerate binding site. Glu204 acts as the Proton donor in catalysis. Mg(2+) is bound by residues Asp241, Glu282, and Asp309. (2R)-2-phosphoglycerate-binding residues include Lys334, Arg363, Ser364, and Lys385. The active-site Proton acceptor is Lys334.

It belongs to the enolase family. The cofactor is Mg(2+).

The protein resides in the cytoplasm. It localises to the secreted. The protein localises to the cell surface. It carries out the reaction (2R)-2-phosphoglycerate = phosphoenolpyruvate + H2O. It functions in the pathway carbohydrate degradation; glycolysis; pyruvate from D-glyceraldehyde 3-phosphate: step 4/5. Catalyzes the reversible conversion of 2-phosphoglycerate (2-PG) into phosphoenolpyruvate (PEP). It is essential for the degradation of carbohydrates via glycolysis. The sequence is that of Enolase from Mycobacterium marinum (strain ATCC BAA-535 / M).